We begin with the raw amino-acid sequence, 103 residues long: MTKSELIEILARRQAHLKSDDVDLAVKSLLEMMGQALSDGDRIEIRGFGSFSLHYRPPRLGRNPKTGESVALPGKHVPHFKPGKELRERVSSVVPVDVADTAD.

The interval 62–81 (RNPKTGESVALPGKHVPHFK) is disordered.

Belongs to the bacterial histone-like protein family. Heterodimer of an alpha and a beta chain.

Functionally, this protein is one of the two subunits of integration host factor, a specific DNA-binding protein that functions in genetic recombination as well as in transcriptional and translational control. The chain is Integration host factor subunit beta from Xanthomonas axonopodis pv. citri (strain 306).